We begin with the raw amino-acid sequence, 108 residues long: Immunoglobulin kappa variable 11-125 (108 aa).

A framework-1 region spans residues 1–23 (DVQMIQSPSSLSASLGDIVTMTC). Residues C23 and C88 are joined by a disulfide bond. The interval 24–34 (QASQGTSINLN) is complementarity-determining-1. The tract at residues 35-49 (WFQQKPGKAPKLLIY) is framework-2. The segment at 50–56 (GASILED) is complementarity-determining-2. The framework-3 stretch occupies residues 57 to 88 (GVPSRFSGSRYGTDFTLTISSLEDEDMATYFC). The complementarity-determining-3 stretch occupies residues 89–97 (LQHSYLPYT). The framework-4 stretch occupies residues 98-108 (FGGGTKLEIKR).

This is Immunoglobulin kappa variable 11-125 from Mus musculus (Mouse).